Here is a 92-residue protein sequence, read N- to C-terminus: SPbeta prophage-derived uncharacterized protein YopY (92 aa).

The protein is SPbeta prophage-derived uncharacterized protein YopY (yopY) of Bacillus subtilis (strain 168).